The sequence spans 214 residues: Rac-like GTP-binding protein 2 (214 aa).

14–21 (GDGAVGKT) lines the GTP pocket. The short motif at 36-44 (YIPTVFDNF) is the Effector region element. GTP-binding positions include 61–65 (DTAGQ) and 119–122 (TKLD).

The protein belongs to the small GTPase superfamily. Rho family. Post-translationally, may be palmitoylated.

The protein resides in the cytoplasm. The protein localises to the membrane. In terms of biological role, inactive GDP-bound Rho GTPases reside in the cytosol, are found in a complex with Rho GDP-dissociation inhibitors (Rho GDIs), and are released from the GDI protein in order to translocate to membranes upon activation. This Oryza sativa subsp. japonica (Rice) protein is Rac-like GTP-binding protein 2 (RAC2).